The following is a 493-amino-acid chain: Cytochrome P450 2E1 (493 aa).

298 to 303 (FAGTET) lines the substrate pocket. Cys-437 is a heme binding site.

It belongs to the cytochrome P450 family. In terms of assembly, interacts with chaperones HSP70 and HSP90; this interaction is required for initial targeting to mitochondria. The cofactor is heme.

It localises to the endoplasmic reticulum membrane. The protein localises to the microsome membrane. The protein resides in the mitochondrion inner membrane. The enzyme catalyses an organic molecule + reduced [NADPH--hemoprotein reductase] + O2 = an alcohol + oxidized [NADPH--hemoprotein reductase] + H2O + H(+). It catalyses the reaction (5Z,8Z,11Z)-eicosatrienoate + reduced [NADPH--hemoprotein reductase] + O2 = 19-hydroxy-(5Z,8Z,11Z)-eicosatrienoate + oxidized [NADPH--hemoprotein reductase] + H2O + H(+). The catalysed reaction is (5Z,8Z,11Z,14Z,17Z)-eicosapentaenoate + reduced [NADPH--hemoprotein reductase] + O2 = 19-hydroxy-(5Z,8Z,11Z,14Z,17Z)-eicosapentaenoate + oxidized [NADPH--hemoprotein reductase] + H2O + H(+). It carries out the reaction (4Z,7Z,10Z,13Z,16Z,19Z)-docosahexaenoate + reduced [NADPH--hemoprotein reductase] + O2 = 21-hydroxy-(4Z,7Z,10Z,13Z,16Z,19Z)-docosahexaenoate + oxidized [NADPH--hemoprotein reductase] + H2O + H(+). The enzyme catalyses dodecanoate + reduced [NADPH--hemoprotein reductase] + O2 = 11-hydroxydodecanoate + oxidized [NADPH--hemoprotein reductase] + H2O + H(+). It catalyses the reaction tetradecanoate + reduced [NADPH--hemoprotein reductase] + O2 = 13-hydroxytetradecanoate + oxidized [NADPH--hemoprotein reductase] + H2O + H(+). The catalysed reaction is 4-nitrophenol + NADPH + O2 + H(+) = 4-nitrocatechol + NADP(+) + H2O. It participates in lipid metabolism; fatty acid metabolism. With respect to regulation, the omega-1 hydroxylase activity is stimulated by cytochrome b5. Functionally, a cytochrome P450 monooxygenase involved in the metabolism of fatty acids. Mechanistically, uses molecular oxygen inserting one oxygen atom into a substrate, and reducing the second into a water molecule, with two electrons provided by NADPH via cytochrome P450 reductase (NADPH--hemoprotein reductase). Catalyzes the hydroxylation of carbon-hydrogen bonds. Hydroxylates fatty acids specifically at the omega-1 position displaying the highest catalytic activity for saturated fatty acids. May be involved in the oxidative metabolism of xenobiotics. This chain is Cytochrome P450 2E1, found in Homo sapiens (Human).